A 191-amino-acid chain; its full sequence is Programmed cell death protein 6 (191 aa).

Ala2 is modified (N-acetylalanine). EF-hand domains are found at residues 23 to 58 (PDQS…GTWT), 59 to 89 (PFNP…TGVW), 90 to 125 (KYIT…FGYR), 126 to 161 (LSDQ…LQRL), and 162 to 191 (TDIF…FSIV). The Ca(2+) site is built by Asp36, Asp38, Ser40, Val42, and Glu47. Positions 103, 105, 107, 109, and 114 each coordinate Ca(2+). Mg(2+) is bound by residues Asp169, Asp171, Asp173, and Trp175.

In terms of assembly, homodimer and heterodimer; heterodimerizes (via the EF-hand 5) with PEF1. Isoform 1 and isoform 2 self-associate; probably forming homodimers. Interacts with CPNE4 (via VWFA domain). Interacts with PDCD6IP; the interaction is calcium-dependent. Interacts with RBM22. Interacts with PLSCR4. Interacts with ANXA7 and TSG101. Interacts with DAPK1. Interacts with SEC31A; the interaction is calcium-dependent and promotes monoubiquitination of SEC31A. Interacts with ANXA11 (via N-terminus); the interaction is calcium-dependent. Interacts with PLSCR3 (via N-terminus); the interaction is calcium-dependent. Interacts with MCOLN1; the interaction is calcium-dependent. Interacts with KDR; the interaction is calcium-dependent. Interacts with HEBP2; the interaction is calcium-dependent. Interacts with TFG. Isoform 1: Interacts with SHISA5, leading to stabilize it. Isoform 2: Does not interact with SHISA5. Isoform 2: Does not interact with PDCD6IP, TSG101, ANXA7 and ANXA11.

The protein resides in the endoplasmic reticulum membrane. Its subcellular location is the cytoplasmic vesicle. It localises to the COPII-coated vesicle membrane. The protein localises to the cytoplasm. It is found in the nucleus. The protein resides in the endosome. Its function is as follows. Calcium sensor that plays a key role in processes such as endoplasmic reticulum (ER)-Golgi vesicular transport, endosomal biogenesis or membrane repair. Acts as an adapter that bridges unrelated proteins or stabilizes weak protein-protein complexes in response to calcium: calcium-binding triggers exposure of apolar surface, promoting interaction with different sets of proteins thanks to 3 different hydrophobic pockets, leading to translocation to membranes. Involved in ER-Golgi transport by promoting the association between PDCD6IP and TSG101, thereby bridging together the ESCRT-III and ESCRT-I complexes. Together with PEF1, acts as a calcium-dependent adapter for the BCR(KLHL12) complex, a complex involved in ER-Golgi transport by regulating the size of COPII coats. In response to cytosolic calcium increase, the heterodimer formed with PEF1 interacts with, and bridges together the BCR(KLHL12) complex and SEC31 (SEC31A or SEC31B), promoting monoubiquitination of SEC31 and subsequent collagen export, which is required for neural crest specification. Involved in the regulation of the distribution and function of MCOLN1 in the endosomal pathway. Promotes localization and polymerization of TFG at endoplasmic reticulum exit site. Required for T-cell receptor-, Fas-, and glucocorticoid-induced apoptosis. May mediate Ca(2+)-regulated signals along the death pathway: interaction with DAPK1 can accelerate apoptotic cell death by increasing caspase-3 activity. Its role in apoptosis may however be indirect, as suggested by knockout experiments. May inhibit KDR/VEGFR2-dependent angiogenesis; the function involves inhibition of VEGF-induced phosphorylation of the Akt signaling pathway. In terms of biological role, has a lower Ca(2+) affinity than isoform 1. In Mus musculus (Mouse), this protein is Programmed cell death protein 6 (Pdcd6).